The primary structure comprises 103 residues: Histone H4 (103 aa).

Residues 1–14 (MSGRGKGGKGLGKG) show a composition bias toward gly residues. The interval 1 to 20 (MSGRGKGGKGLGKGGAKRHR) is disordered. Lysine 6, lysine 9, lysine 13, lysine 17, lysine 32, and lysine 45 each carry N6-(2-hydroxyisobutyryl)lysine; alternate. An N6-acetyl-N6-methyllysine; alternate modification is found at lysine 6. An N6-butyryllysine; alternate mark is found at lysine 6, lysine 9, lysine 13, lysine 17, lysine 32, and lysine 45. Position 6 is an N6-glutaryllysine; alternate (lysine 6). Lysine 9 carries the N6-propionyllysine; alternate modification. Lysine 13 is modified (N6-acetyl-N6-methyllysine; alternate). The residue at position 13 (lysine 13) is an N6-glutaryllysine; alternate. Lysine 17, lysine 32, and lysine 45 each carry N6-propionyllysine; alternate. A DNA-binding region spans residues 17-21 (KRHRK). Lysine 32 carries the post-translational modification N6-glutaryllysine; alternate. At lysine 32 the chain carries N6-succinyllysine; alternate. Residues lysine 60, lysine 78, lysine 80, and lysine 92 each carry the N6-glutaryllysine; alternate modification. N6-(2-hydroxyisobutyryl)lysine is present on lysine 60. Lysine 78, lysine 80, and lysine 92 each carry N6-(2-hydroxyisobutyryl)lysine; alternate. N6-butyryllysine; alternate occurs at positions 78, 80, and 92. N6-propionyllysine; alternate is present on residues lysine 78, lysine 80, and lysine 92. Lysine 78 carries the N6-succinyllysine modification. The residue at position 92 (lysine 92) is an N6-succinyllysine; alternate.

It belongs to the histone H4 family. The nucleosome is a histone octamer containing two molecules each of H2A, H2B, H3 and H4 assembled in one H3-H4 heterotetramer and two H2A-H2B heterodimers. The octamer wraps approximately 147 bp of DNA. Butyrylation of histones marks active promoters and competes with histone acetylation. In terms of processing, glutarylation at Lys-92 (H4K91glu) destabilizes nucleosomes by promoting dissociation of the H2A-H2B dimers from nucleosomes.

It localises to the nucleus. It is found in the chromosome. Its function is as follows. Core component of nucleosome. Nucleosomes wrap and compact DNA into chromatin, limiting DNA accessibility to the cellular machineries which require DNA as a template. Histones thereby play a central role in transcription regulation, DNA repair, DNA replication and chromosomal stability. DNA accessibility is regulated via a complex set of post-translational modifications of histones, also called histone code, and nucleosome remodeling. This is Histone H4 (H4.1) from Oikopleura dioica (Tunicate).